The primary structure comprises 87 residues: uncharacterized protein (87 aa).

To B.subtilis XkdR.

This is an uncharacterized protein from Bacillus subtilis (strain 168).